Reading from the N-terminus, the 439-residue chain is C4-dicarboxylate transport protein (439 aa).

9 helical membrane passes run 9–29, 45–65, 77–97, 145–165, 185–205, 223–243, 290–310, 332–352, and 353–373; these read SLYAQVIVAIIIGVLLGHFLP, LIKMIIAPVIFCTVVIGIAGM, LALLYFEVMSTVALLVGLIIV, AFAKGDVLQVLLVSVLFGFAL, VLFTIVGFIMRAAPVGAFGAM, LMGAFYLTCLFFIFVVLGIVT, VVGLVIPTGYSFNLDGTAIYL, TLLAVLLLTSKGAAGITGSGF, and IVLAATLSAVGHVPVAGLALI. Residues 417–439 are disordered; sequence NESPQAADQPEKILDQTNTKLGA.

This sequence belongs to the dicarboxylate/amino acid:cation symporter (DAACS) (TC 2.A.23) family.

It localises to the cell inner membrane. In terms of biological role, responsible for the transport of dicarboxylates such as succinate, fumarate, and malate from the periplasm across the membrane. In Janthinobacterium sp. (strain Marseille) (Minibacterium massiliensis), this protein is C4-dicarboxylate transport protein.